A 318-amino-acid polypeptide reads, in one-letter code: tRNA U34 carboxymethyltransferase (318 aa).

K88, W102, K107, G126, M192, Y196, and R311 together coordinate carboxy-S-adenosyl-L-methionine.

The protein belongs to the class I-like SAM-binding methyltransferase superfamily. CmoB family. In terms of assembly, homotetramer.

It carries out the reaction carboxy-S-adenosyl-L-methionine + 5-hydroxyuridine(34) in tRNA = 5-carboxymethoxyuridine(34) in tRNA + S-adenosyl-L-homocysteine + H(+). In terms of biological role, catalyzes carboxymethyl transfer from carboxy-S-adenosyl-L-methionine (Cx-SAM) to 5-hydroxyuridine (ho5U) to form 5-carboxymethoxyuridine (cmo5U) at position 34 in tRNAs. The polypeptide is tRNA U34 carboxymethyltransferase (Pseudomonas fluorescens (strain Pf0-1)).